Consider the following 187-residue polypeptide: UPF0301 protein PC1_3712 (187 aa).

The protein belongs to the UPF0301 (AlgH) family.

The sequence is that of UPF0301 protein PC1_3712 from Pectobacterium carotovorum subsp. carotovorum (strain PC1).